We begin with the raw amino-acid sequence, 758 residues long: Calpain (758 aa).

In terms of domain architecture, Calpain catalytic spans 99–397 (LWEDPDFPAN…FSRVEVCHLG (299 aa)). Active-site residues include Cys-154, His-313, and Asn-337. The interval 398 to 562 (LESLEYNQNF…TSITEQELDE (165 aa)) is domain III. Positions 563-582 (DNTNQGLPDDVIEALKLEDT) are linker. Positions 583-757 (LLDEDQEIEQ…AEDYLRFSVY (175 aa)) are domain IV. Ca(2+) contacts are provided by Asp-641, Asn-643, Thr-645, His-647, Glu-652, Asp-671, Asp-673, Ser-675, Tyr-677, and Glu-682. EF-hand domains lie at 658-693 (IQAK…AGYH) and 694-729 (VSNR…LKTA).

The protein belongs to the peptidase C2 family.

With respect to regulation, activated by free cytoplasmic calcium. Calpains are calcium-activated non-lysosomal thiol-proteases. This is Calpain from Schistosoma mansoni (Blood fluke).